The primary structure comprises 93 residues: Large ribosomal subunit protein uL23c (93 aa).

It belongs to the universal ribosomal protein uL23 family. Part of the 50S ribosomal subunit.

It is found in the plastid. The protein resides in the chloroplast. Binds to 23S rRNA. This chain is Large ribosomal subunit protein uL23c (rpl23), found in Adiantum capillus-veneris (Maidenhair fern).